The sequence spans 38 residues: Potassium channel toxin alpha-KTx 3.3 (38 aa).

Cystine bridges form between Cys-8-Cys-28, Cys-14-Cys-33, and Cys-18-Cys-35. Residues Gly-26 to Cys-33 form an interaction with Ca(2+)-activated K(+) channels region.

It belongs to the short scorpion toxin superfamily. Potassium channel inhibitor family. Alpha-KTx 03 subfamily. Expressed by the venom gland.

Its subcellular location is the secreted. In terms of biological role, potent inhibitor of shaker potassium channels as well as the mammalian homologs of shaker. This is Potassium channel toxin alpha-KTx 3.3 from Leiurus hebraeus (Hebrew deathstalker scorpion).